The following is a 98-amino-acid chain: U-scoloptoxin(16)-Er9a (98 aa).

A signal peptide spans methionine 1 to glycine 24.

This sequence belongs to the scoloptoxin-16 family. Post-translationally, contains 4 disulfide bonds. In terms of tissue distribution, expressed by the venom gland.

The protein resides in the secreted. The sequence is that of U-scoloptoxin(16)-Er9a from Ethmostigmus rubripes (Giant centipede).